The following is a 710-amino-acid chain: Protein phosphatase 1 regulatory subunit 37 (710 aa).

Residues 1 to 12 show a composition bias toward pro residues; the sequence is MEIPPQEAPPGP. The segment at 1–46 is disordered; it reads MEIPPQEAPPGPGADADADAEAEEAPAEAGSSSGASPPTDGRLKAA. Positions 16 to 26 are enriched in acidic residues; that stretch reads ADADAEAEEAP. A compositionally biased stretch (low complexity) spans 27-38; sequence AEAGSSSGASPP. 2 positions are modified to phosphoserine: Ser-54 and Ser-60. 5 LRR repeats span residues 224–244, 252–273, 281–301, 310–330, and 338–358; these read SLAVLHLENASLSGRPLMLLA, NLQELYLADNKLNGLQDSAQLG, SLQILDLRNNHVLDSGLAYIC, GLVTLVLWNNQLTHTGMAFLG, and SLETLNLGHNPIGNEGVRNLK. Positions 487 to 677 are disordered; it reads PLEESGDLPA…APPGLEAKGS (191 aa). The segment covering 512–531 has biased composition (acidic residues); it reads SDSDSDSDREEQEEEEEDQS. A compositionally biased stretch (low complexity) spans 543–565; that stretch reads SSSAPCPALLPSTDSLGPGDKSP. The residue at position 581 (Ser-581) is a Phosphoserine. A compositionally biased stretch (pro residues) spans 603–624; the sequence is PPVPPTSVSSPPPSPPSPPASP. Polar residues predominate over residues 637–649; it reads SEAQPQTEPSQAG. Residues 656-676 show a composition bias toward low complexity; the sequence is LKPEFALALAPEAPPGLEAKG.

The protein belongs to the PPP1R37 family. In terms of assembly, interacts with PPP1CA.

In terms of biological role, inhibits phosphatase activity of protein phosphatase 1 (PP1) complexes. The protein is Protein phosphatase 1 regulatory subunit 37 (Ppp1r37) of Rattus norvegicus (Rat).